Consider the following 393-residue polypeptide: Formate-dependent phosphoribosylglycinamide formyltransferase (393 aa).

Residues 22–23 (EL) and E82 each bind N(1)-(5-phospho-beta-D-ribosyl)glycinamide. ATP contacts are provided by residues R114, K155, 160-165 (SSGKGQ), 195-198 (EGFI), and E203. The ATP-grasp domain occupies 119–308 (RLAAEELKLP…QFALHARAIL (190 aa)). Residues E267 and E279 each contribute to the Mg(2+) site. N(1)-(5-phospho-beta-D-ribosyl)glycinamide contacts are provided by residues D286, K356, and 363–364 (RR).

This sequence belongs to the PurK/PurT family. Homodimer.

The enzyme catalyses N(1)-(5-phospho-beta-D-ribosyl)glycinamide + formate + ATP = N(2)-formyl-N(1)-(5-phospho-beta-D-ribosyl)glycinamide + ADP + phosphate + H(+). The protein operates within purine metabolism; IMP biosynthesis via de novo pathway; N(2)-formyl-N(1)-(5-phospho-D-ribosyl)glycinamide from N(1)-(5-phospho-D-ribosyl)glycinamide (formate route): step 1/1. Its function is as follows. Involved in the de novo purine biosynthesis. Catalyzes the transfer of formate to 5-phospho-ribosyl-glycinamide (GAR), producing 5-phospho-ribosyl-N-formylglycinamide (FGAR). Formate is provided by PurU via hydrolysis of 10-formyl-tetrahydrofolate. The sequence is that of Formate-dependent phosphoribosylglycinamide formyltransferase from Pseudomonas syringae pv. syringae (strain B728a).